The sequence spans 412 residues: Multifunctional CCA protein (412 aa).

Residues G8 and R11 each coordinate ATP. Residues G8 and R11 each contribute to the CTP site. 2 residues coordinate Mg(2+): D21 and D23. Residues R91, R137, and R140 each coordinate ATP. Residues R91, R137, and R140 each coordinate CTP. Residues 228–329 (TGIHTLMTLS…VKLFDSIDAW (102 aa)) enclose the HD domain.

Belongs to the tRNA nucleotidyltransferase/poly(A) polymerase family. Bacterial CCA-adding enzyme type 1 subfamily. Monomer. Can also form homodimers and oligomers. Mg(2+) serves as cofactor. Ni(2+) is required as a cofactor.

It carries out the reaction a tRNA precursor + 2 CTP + ATP = a tRNA with a 3' CCA end + 3 diphosphate. The enzyme catalyses a tRNA with a 3' CCA end + 2 CTP + ATP = a tRNA with a 3' CCACCA end + 3 diphosphate. Functionally, catalyzes the addition and repair of the essential 3'-terminal CCA sequence in tRNAs without using a nucleic acid template. Adds these three nucleotides in the order of C, C, and A to the tRNA nucleotide-73, using CTP and ATP as substrates and producing inorganic pyrophosphate. tRNA 3'-terminal CCA addition is required both for tRNA processing and repair. Also involved in tRNA surveillance by mediating tandem CCA addition to generate a CCACCA at the 3' terminus of unstable tRNAs. While stable tRNAs receive only 3'-terminal CCA, unstable tRNAs are marked with CCACCA and rapidly degraded. This chain is Multifunctional CCA protein, found in Escherichia coli (strain SE11).